Reading from the N-terminus, the 312-residue chain is Methionyl-tRNA formyltransferase (312 aa).

Residue 109–112 participates in (6S)-5,6,7,8-tetrahydrofolate binding; that stretch reads SILP.

This sequence belongs to the Fmt family.

It carries out the reaction L-methionyl-tRNA(fMet) + (6R)-10-formyltetrahydrofolate = N-formyl-L-methionyl-tRNA(fMet) + (6S)-5,6,7,8-tetrahydrofolate + H(+). In terms of biological role, attaches a formyl group to the free amino group of methionyl-tRNA(fMet). The formyl group appears to play a dual role in the initiator identity of N-formylmethionyl-tRNA by promoting its recognition by IF2 and preventing the misappropriation of this tRNA by the elongation apparatus. The protein is Methionyl-tRNA formyltransferase of Dictyoglomus thermophilum (strain ATCC 35947 / DSM 3960 / H-6-12).